Reading from the N-terminus, the 436-residue chain is Adenylosuccinate synthetase (436 aa).

GTP-binding positions include 12-18 (GDEGKGK) and 40-42 (GHT). The active-site Proton acceptor is the Asp13. Residues Asp13 and Gly40 each contribute to the Mg(2+) site. Residues 13-16 (DEGK), 38-41 (NAGH), Thr128, Arg142, Gln223, Thr238, and Arg302 contribute to the IMP site. Catalysis depends on His41, which acts as the Proton donor. Residue 298–304 (TTTGRRR) participates in substrate binding. Residues Arg304, 330–332 (KLD), and 412–414 (SLG) each bind GTP.

This sequence belongs to the adenylosuccinate synthetase family. As to quaternary structure, homodimer. It depends on Mg(2+) as a cofactor.

It localises to the cytoplasm. The catalysed reaction is IMP + L-aspartate + GTP = N(6)-(1,2-dicarboxyethyl)-AMP + GDP + phosphate + 2 H(+). It functions in the pathway purine metabolism; AMP biosynthesis via de novo pathway; AMP from IMP: step 1/2. Functionally, plays an important role in the de novo pathway of purine nucleotide biosynthesis. Catalyzes the first committed step in the biosynthesis of AMP from IMP. In Prochlorococcus marinus (strain MIT 9301), this protein is Adenylosuccinate synthetase.